The chain runs to 211 residues: ATP phosphoribosyltransferase (211 aa).

This sequence belongs to the ATP phosphoribosyltransferase family. Short subfamily. Heteromultimer composed of HisG and HisZ subunits.

The protein resides in the cytoplasm. The catalysed reaction is 1-(5-phospho-beta-D-ribosyl)-ATP + diphosphate = 5-phospho-alpha-D-ribose 1-diphosphate + ATP. The protein operates within amino-acid biosynthesis; L-histidine biosynthesis; L-histidine from 5-phospho-alpha-D-ribose 1-diphosphate: step 1/9. Its function is as follows. Catalyzes the condensation of ATP and 5-phosphoribose 1-diphosphate to form N'-(5'-phosphoribosyl)-ATP (PR-ATP). Has a crucial role in the pathway because the rate of histidine biosynthesis seems to be controlled primarily by regulation of HisG enzymatic activity. The chain is ATP phosphoribosyltransferase from Bacillus cereus (strain G9842).